The primary structure comprises 129 residues: Holo-[acyl-carrier-protein] synthase (129 aa).

Mg(2+) contacts are provided by D8 and E60.

Belongs to the P-Pant transferase superfamily. AcpS family. Mg(2+) serves as cofactor.

Its subcellular location is the cytoplasm. The catalysed reaction is apo-[ACP] + CoA = holo-[ACP] + adenosine 3',5'-bisphosphate + H(+). Transfers the 4'-phosphopantetheine moiety from coenzyme A to a Ser of acyl-carrier-protein. The chain is Holo-[acyl-carrier-protein] synthase from Anaeromyxobacter sp. (strain Fw109-5).